The primary structure comprises 218 residues: Methylthioribulose-1-phosphate dehydratase (218 aa).

2 residues coordinate Zn(2+): His107 and His109.

It belongs to the aldolase class II family. MtnB subfamily. It depends on Zn(2+) as a cofactor.

It carries out the reaction 5-(methylsulfanyl)-D-ribulose 1-phosphate = 5-methylsulfanyl-2,3-dioxopentyl phosphate + H2O. It functions in the pathway amino-acid biosynthesis; L-methionine biosynthesis via salvage pathway; L-methionine from S-methyl-5-thio-alpha-D-ribose 1-phosphate: step 2/6. Catalyzes the dehydration of methylthioribulose-1-phosphate (MTRu-1-P) into 2,3-diketo-5-methylthiopentyl-1-phosphate (DK-MTP-1-P). The protein is Methylthioribulose-1-phosphate dehydratase of Xylella fastidiosa (strain Temecula1 / ATCC 700964).